A 166-amino-acid chain; its full sequence is Early E3 18.5 kDa glycoprotein (166 aa).

Residues Met-1–Ala-19 form the signal peptide. Over Asn-20–Ile-131 the chain is Lumenal. Asn-31 carries an N-linked (GlcNAc...) asparagine; by host glycan. 2 cysteine pairs are disulfide-bonded: Cys-32-Cys-50 and Cys-44-Cys-106. 3 N-linked (GlcNAc...) asparagine; by host glycosylation sites follow: Asn-63, Asn-67, and Asn-97. Residues Ala-132–Val-152 traverse the membrane as a helical segment. The Cytoplasmic portion of the chain corresponds to Thr-153 to Pro-166. Residues Lys-162–Pro-166 carry the Di-lysine motif motif.

This sequence belongs to the adenoviridae E19 family. Post-translationally, both disulfide bonds are absolutely critical for the interaction with MHC antigens. N-glycosylated; high-mannose.

It is found in the host endoplasmic reticulum membrane. In terms of biological role, binds and retains class I heavy chains in the endoplasmic reticulum during the early period of virus infection, thereby impairing their transport to the cell surface. Also delays the expression of class I alleles that it cannot affect by direct retention. Binds transporters associated with antigen processing (TAP) and acts as a tapasin inhibitor, preventing class I/TAP association. In consequence, infected cells are masked for immune recognition by cytotoxic T-lymphocytes. In Human adenovirus B serotype 11 (strain BC34) (HAdV-11), this protein is Early E3 18.5 kDa glycoprotein.